We begin with the raw amino-acid sequence, 263 residues long: Probable ribosomal RNA small subunit methyltransferase A (263 aa).

S-adenosyl-L-methionine-binding residues include Leu12, Gly37, Glu58, Asp83, and Asn100.

The protein belongs to the class I-like SAM-binding methyltransferase superfamily. rRNA adenine N(6)-methyltransferase family. RsmA subfamily.

Its subcellular location is the cytoplasm. In terms of biological role, specifically dimethylates two adjacent adenosines in the loop of a conserved hairpin near the 3'-end of 16S rRNA in the 30S particle. May play a critical role in biogenesis of 30S subunits. The protein is Probable ribosomal RNA small subunit methyltransferase A of Methanococcus maripaludis (strain C5 / ATCC BAA-1333).